An 876-amino-acid chain; its full sequence is Leucine--tRNA ligase (876 aa).

A 'HIGH' region motif is present at residues 42–52; the sequence is PYPSGKLHMGH. Positions 634 to 638 match the 'KMSKS' region motif; the sequence is KMSKS. Position 637 (K637) interacts with ATP.

Belongs to the class-I aminoacyl-tRNA synthetase family.

The protein localises to the cytoplasm. It carries out the reaction tRNA(Leu) + L-leucine + ATP = L-leucyl-tRNA(Leu) + AMP + diphosphate. This chain is Leucine--tRNA ligase, found in Neisseria meningitidis serogroup C / serotype 2a (strain ATCC 700532 / DSM 15464 / FAM18).